The primary structure comprises 429 residues: Serine hydroxymethyltransferase (429 aa).

Residues L133 and 137–139 (GHL) each bind (6S)-5,6,7,8-tetrahydrofolate. The residue at position 243 (K243) is an N6-(pyridoxal phosphate)lysine. Position 259 (E259) interacts with (6S)-5,6,7,8-tetrahydrofolate.

The protein belongs to the SHMT family. As to quaternary structure, homodimer. Pyridoxal 5'-phosphate is required as a cofactor.

It is found in the cytoplasm. It catalyses the reaction (6R)-5,10-methylene-5,6,7,8-tetrahydrofolate + glycine + H2O = (6S)-5,6,7,8-tetrahydrofolate + L-serine. Its pathway is one-carbon metabolism; tetrahydrofolate interconversion. The protein operates within amino-acid biosynthesis; glycine biosynthesis; glycine from L-serine: step 1/1. Its function is as follows. Catalyzes the reversible interconversion of serine and glycine with tetrahydrofolate (THF) serving as the one-carbon carrier. This reaction serves as the major source of one-carbon groups required for the biosynthesis of purines, thymidylate, methionine, and other important biomolecules. Also exhibits THF-independent aldolase activity toward beta-hydroxyamino acids, producing glycine and aldehydes, via a retro-aldol mechanism. This chain is Serine hydroxymethyltransferase, found in Aster yellows witches'-broom phytoplasma (strain AYWB).